The sequence spans 581 residues: MAKQLSFSNESREALEKGVNFVANAVKVTIGPKAKNVVIDRKFGSPDIVSDGSTVAKEIEIENPISNLGAKLIEQVASKTKESAGDGTTTATILTQKMVQEGLKNIASGASPIELKKGMEVGLDFVLEKLSSKSISLSGSDIQKVATVSAGGDEEIGSIISKAMDIVTSDGVINVEESQSLDTELDITEGMSFDRGYSSPYFVTDQERQICELENPKILITDQKISTLVDLVPILEEIQKSGSPFLILAEDIEGEALTTLVLNKNSGVLNVASVRAPLFGERRKAALEDIAILTGAKLISEDKSMTLDKVSINDLGKAKKITITKDKTTIIAFEDTKDLVKARVEKLKREVDMTDSEYDQDKINERIAKLAGGVALIKVGAATETEMKYKKLRIEDSLNATKAAIEEGVVPGGGQTLIEISDDLLNLSQTSSDDLRTGINIIKEALLEPTKQIAKNAGFNGDVVIAEIKRLNKGFNANSGKYEDLKNSGILDPTKVIRLALQDSVSIAAMLLTTEVAIADIPEPEPAAPGGPSGDPMGGMGGMGMPGMGGMGMPGMGGMGMPGMGGMGMPGMGGMGMPGMM.

ATP is bound by residues 29–32 (TIGP), 86–90 (DGTTT), glycine 413, and aspartate 492. The segment at 522 to 543 (PEPEPAAPGGPSGDPMGGMGGM) is disordered. Residues 531–543 (GPSGDPMGGMGGM) are compositionally biased toward gly residues.

This sequence belongs to the chaperonin (HSP60) family. In terms of assembly, forms a cylinder of 14 subunits composed of two heptameric rings stacked back-to-back. Interacts with the co-chaperonin GroES.

The protein localises to the cytoplasm. The enzyme catalyses ATP + H2O + a folded polypeptide = ADP + phosphate + an unfolded polypeptide.. Functionally, together with its co-chaperonin GroES, plays an essential role in assisting protein folding. The GroEL-GroES system forms a nano-cage that allows encapsulation of the non-native substrate proteins and provides a physical environment optimized to promote and accelerate protein folding. This Prochlorococcus marinus (strain MIT 9215) protein is Chaperonin GroEL 1.